The primary structure comprises 238 residues: Endothelial protein C receptor (238 aa).

Positions 1–17 (MLTTLLPILLLSGWAFC) are cleaved as a signal peptide. The Extracellular portion of the chain corresponds to 18–210 (SQDASDGLQR…GSQTSRSYTS (193 aa)). N-linked (GlcNAc...) asparagine glycosylation is found at Asn-47, Asn-64, Asn-136, and Asn-172. A disulfide bridge connects residues Cys-118 and Cys-186. The chain crosses the membrane as a helical span at residues 211 to 231 (LVLGVLVGSFIIAGVAVGIFL). The Cytoplasmic segment spans residues 232-238 (CTGGRRC).

N-glycosylated. In terms of processing, a soluble form exists; probably released by a metalloprotease. Seems to have the same activity as the membrane-bound form. Expressed strongly in the endothelial cells of arteries and veins in heart and lung, less intensely in capillaries in the lung and skin, and not at all in the endothelium of small vessels of the liver and kidney.

It localises to the membrane. In terms of biological role, binds activated protein C. Enhances protein C activation by the thrombin-thrombomodulin complex; plays a role in the protein C pathway controlling blood coagulation. This Homo sapiens (Human) protein is Endothelial protein C receptor (PROCR).